The following is a 218-amino-acid chain: Elongation factor Ts (218 aa).

The involved in Mg(2+) ion dislocation from EF-Tu stretch occupies residues 82-85 (TDFV).

It belongs to the EF-Ts family.

Its subcellular location is the cytoplasm. Associates with the EF-Tu.GDP complex and induces the exchange of GDP to GTP. It remains bound to the aminoacyl-tRNA.EF-Tu.GTP complex up to the GTP hydrolysis stage on the ribosome. This Prochlorococcus marinus (strain MIT 9215) protein is Elongation factor Ts.